Here is a 112-residue protein sequence, read N- to C-terminus: Iron-sulfur cluster assembly protein CyaY (112 aa).

Belongs to the frataxin family.

In terms of biological role, involved in iron-sulfur (Fe-S) cluster assembly. May act as a regulator of Fe-S biogenesis. The protein is Iron-sulfur cluster assembly protein CyaY of Herminiimonas arsenicoxydans.